Reading from the N-terminus, the 104-residue chain is MHLTPREQEKLLIVVAADLARRRKDRGIRLNHPEAVAYITAEILEGAREGRTVTDLMAYGTTLLTYDDVMEGVPEMIRAVQVEATFPDGTKLVSVHDPIRRRLP.

Belongs to the urease gamma subunit family. Heterotrimer of UreA (gamma), UreB (beta) and UreC (alpha) subunits. Three heterotrimers associate to form the active enzyme.

The protein localises to the cytoplasm. The catalysed reaction is urea + 2 H2O + H(+) = hydrogencarbonate + 2 NH4(+). Its pathway is nitrogen metabolism; urea degradation; CO(2) and NH(3) from urea (urease route): step 1/1. This chain is Urease subunit gamma, found in Actinomyces naeslundii.